A 480-amino-acid polypeptide reads, in one-letter code: uncharacterized protein (480 aa).

An N-terminal signal peptide occupies residues methionine 1–alanine 21. Disordered regions lie at residues serine 38–cysteine 72 and serine 116–threonine 147. A compositionally biased stretch (low complexity) spans leucine 51–aspartate 60. The span at leucine 133 to asparagine 144 shows a compositional bias: polar residues. The chain crosses the membrane as a helical span at residues tyrosine 153–glycine 173. Residues glutamine 404–histidine 480 form a disordered region. The span at asparagine 407–arginine 465 shows a compositional bias: basic and acidic residues. A coiled-coil region spans residues serine 411–valine 467. Residues glutamine 466–histidine 480 show a composition bias toward basic residues.

The protein resides in the membrane. This is an uncharacterized protein from Arabidopsis thaliana (Mouse-ear cress).